Reading from the N-terminus, the 75-residue chain is MARYFRRRKFCRFTSEGVAEIDYKDIVTLKNYITESGKIVPSRITGTSAKYQRQLARAIKRARYLSLLPYTDLHQ.

Belongs to the bacterial ribosomal protein bS18 family. In terms of assembly, part of the 30S ribosomal subunit. Forms a tight heterodimer with protein bS6.

Functionally, binds as a heterodimer with protein bS6 to the central domain of the 16S rRNA, where it helps stabilize the platform of the 30S subunit. The protein is Small ribosomal subunit protein bS18 of Shewanella denitrificans (strain OS217 / ATCC BAA-1090 / DSM 15013).